The following is a 436-amino-acid chain: 3-ketoacyl-CoA thiolase (436 aa).

The active-site Acyl-thioester intermediate is the C99. Residues H392 and C422 each act as proton acceptor in the active site.

It belongs to the thiolase-like superfamily. Thiolase family. Heterotetramer of two alpha chains (FadJ) and two beta chains (FadI).

The protein resides in the cytoplasm. It catalyses the reaction an acyl-CoA + acetyl-CoA = a 3-oxoacyl-CoA + CoA. It participates in lipid metabolism; fatty acid beta-oxidation. Functionally, catalyzes the final step of fatty acid oxidation in which acetyl-CoA is released and the CoA ester of a fatty acid two carbons shorter is formed. The chain is 3-ketoacyl-CoA thiolase from Shewanella putrefaciens (strain CN-32 / ATCC BAA-453).